Here is a 600-residue protein sequence, read N- to C-terminus: E3 ubiquitin-protein ligase RLIM (600 aa).

Met1 is modified (N-acetylmethionine). Positions 1-11 (MENSDSNDKGS) are enriched in basic and acidic residues. Disordered stretches follow at residues 1–24 (MENSDSNDKGSDQSAAQRRSQMDR), 49–355 (NNLL…ERGG), and 417–497 (SDSE…VTFD). 2 stretches are compositionally biased toward polar residues: residues 103-131 (SVRQTGNTTRSGQRGNQSWRAVSRTNPNS) and 140-152 (INVNRNNGSQTSE). Phosphoserine is present on Ser163. The span at 166-175 (NMESSSQRQM) shows a compositional bias: polar residues. Low complexity predominate over residues 176–187 (ENSASESASARP). Ser194, Ser227, and Ser229 each carry phosphoserine. Residues 213-228 (RSPEHRRTRARAERSR) show a composition bias toward basic and acidic residues. Polar residues predominate over residues 244–255 (LEQSSENEPEGS). Phosphoserine is present on Ser269. A compositionally biased stretch (low complexity) spans 288–306 (SQGTSSSDTGSNSESSGSG). Residues 322 to 332 (RPGEYRQRDSI) show a composition bias toward basic and acidic residues. Positions 333 to 349 (ASRTRSRSQAPNNTVTY) are enriched in polar residues. Over residues 448 to 475 (SGSSSSSSPSPSSSGESSESSSEMFEGS) the composition is skewed to low complexity. The RING-type zinc finger occupies 546-587 (CSVCITEYTEGNKLRKLPCSHEYHVHCIDRWLSENSTCPICR). Positions 597–600 (ESVV) match the PDZ-binding motif.

It belongs to the RNF12 family. In terms of assembly, interacts (via N-terminus) with TERF1. Interacts (via C-terminus) with ESR1. Interacts with LIM/homeobox factors such as LHX3. Interacts with LDB1, LDB2 and SIN3A. Interacts with LIMK1.

The protein localises to the nucleus. The enzyme catalyses S-ubiquitinyl-[E2 ubiquitin-conjugating enzyme]-L-cysteine + [acceptor protein]-L-lysine = [E2 ubiquitin-conjugating enzyme]-L-cysteine + N(6)-ubiquitinyl-[acceptor protein]-L-lysine.. It functions in the pathway protein modification; protein ubiquitination. Its function is as follows. E3 ubiquitin-protein ligase that acts as a negative coregulator for LIM homeodomain transcription factors by mediating the ubiquitination and subsequent degradation of LIM cofactors LDB1 and LDB2 and by mediating the recruitment the SIN3a/histone deacetylase corepressor complex. Ubiquitination and degradation of LIM cofactors LDB1 and LDB2 allows DNA-bound LIM homeodomain transcription factors to interact with other protein partners such as RLIM. Plays a role in telomere length-mediated growth suppression by mediating the ubiquitination and degradation of TERF1. By targeting ZFP42 for degradation, acts as an activator of random inactivation of X chromosome in the embryo, a stochastic process in which one X chromosome is inactivated to minimize sex-related dosage differences of X-encoded genes in somatic cells of female placental mammals. The protein is E3 ubiquitin-protein ligase RLIM (Rlim) of Mus musculus (Mouse).